The sequence spans 376 residues: Sterol 24-C-methyltransferase (376 aa).

The protein belongs to the class I-like SAM-binding methyltransferase superfamily. Erg6/SMT family.

The enzyme catalyses zymosterol + S-adenosyl-L-methionine = fecosterol + S-adenosyl-L-homocysteine + H(+). It functions in the pathway steroid metabolism; ergosterol biosynthesis; ergosterol from zymosterol: step 1/5. Its activity is regulated as follows. Substrate analogs 25-azalanosterol and 24(R,S),25-epiminolanosterol act as inhibitors. Sterol 24-C-methyltransferase; part of the third module of ergosterol biosynthesis pathway that includes the late steps of the pathway. ERG6 catalyzes the methyl transfer from S-adenosyl-methionine to the C-24 of zymosterol to form fecosterol. The third module or late pathway involves the ergosterol synthesis itself through consecutive reactions that mainly occur in the endoplasmic reticulum (ER) membrane. Firstly, the squalene synthase ERG9 catalyzes the condensation of 2 farnesyl pyrophosphate moieties to form squalene, which is the precursor of all steroids. Squalene synthase is crucial for balancing the incorporation of farnesyl diphosphate (FPP) into sterol and nonsterol isoprene synthesis. Secondly, the squalene epoxidase ERG1 catalyzes the stereospecific oxidation of squalene to (S)-2,3-epoxysqualene, which is considered to be a rate-limiting enzyme in steroid biosynthesis. Then, the lanosterol synthase ERG7 catalyzes the cyclization of (S)-2,3 oxidosqualene to lanosterol, a reaction that forms the sterol core. In the next steps, lanosterol is transformed to zymosterol through a complex process involving various demethylation, reduction and desaturation reactions. The lanosterol 14-alpha-demethylase ERG11 (also known as CYP51) catalyzes C14-demethylation of lanosterol to produce 4,4'-dimethyl cholesta-8,14,24-triene-3-beta-ol, which is critical for ergosterol biosynthesis. The C-14 reductase ERG24 reduces the C14=C15 double bond of 4,4-dimethyl-cholesta-8,14,24-trienol to produce 4,4-dimethyl-cholesta-8,24-dienol. 4,4-dimethyl-cholesta-8,24-dienol is substrate of the C-4 demethylation complex ERG25-ERG26-ERG27 in which ERG25 catalyzes the three-step monooxygenation required for the demethylation of 4,4-dimethyl and 4alpha-methylsterols, ERG26 catalyzes the oxidative decarboxylation that results in a reduction of the 3-beta-hydroxy group at the C-3 carbon to an oxo group, and ERG27 is responsible for the reduction of the keto group on the C-3. ERG28 has a role as a scaffold to help anchor ERG25, ERG26 and ERG27 to the endoplasmic reticulum and ERG29 regulates the activity of the iron-containing C4-methylsterol oxidase ERG25. Then, the sterol 24-C-methyltransferase ERG6 catalyzes the methyl transfer from S-adenosyl-methionine to the C-24 of zymosterol to form fecosterol. The C-8 sterol isomerase ERG2 catalyzes the reaction which results in unsaturation at C-7 in the B ring of sterols and thus converts fecosterol to episterol. The sterol-C5-desaturase ERG3 then catalyzes the introduction of a C-5 double bond in the B ring to produce 5-dehydroepisterol. The C-22 sterol desaturase ERG5 further converts 5-dehydroepisterol into ergosta-5,7,22,24(28)-tetraen-3beta-ol by forming the C-22(23) double bond in the sterol side chain. Finally, ergosta-5,7,22,24(28)-tetraen-3beta-ol is substrate of the C-24(28) sterol reductase ERG4 to produce ergosterol. This Candida albicans (strain SC5314 / ATCC MYA-2876) (Yeast) protein is Sterol 24-C-methyltransferase.